The primary structure comprises 149 residues: Large ribosomal subunit protein bL9 (149 aa).

Belongs to the bacterial ribosomal protein bL9 family.

Its function is as follows. Binds to the 23S rRNA. The sequence is that of Large ribosomal subunit protein bL9 from Teredinibacter turnerae (strain ATCC 39867 / T7901).